Here is a 372-residue protein sequence, read N- to C-terminus: Septin-1 (372 aa).

A Septin-type G domain is found at 27–301 (KGFDFTLMVA…EGYRARCLQS (275 aa)). Residues 37-44 (GESGLGKS) form a G1 motif region. GTP is bound by residues 37 to 44 (GESGLGKS), Thr71, Gly97, and 176 to 184 (KADALMPQE). Positions 94 to 97 (DTPG) are G3 motif. The G4 motif stretch occupies residues 175–178 (GKAD). Ser211 carries the post-translational modification Phosphoserine. Gly234 and Arg250 together coordinate GTP. Ser253 carries the phosphoserine; by AURKB modification. The residue at position 256 (Thr256) is a Phosphothreonine. Phosphoserine; by AURKB occurs at positions 312 and 320. The tract at residues 352–372 (LEKMQAQMQQSQAQGEQSDAL) is disordered. Residues 355-372 (MQAQMQQSQAQGEQSDAL) are compositionally biased toward low complexity.

This sequence belongs to the TRAFAC class TrmE-Era-EngA-EngB-Septin-like GTPase superfamily. Septin GTPase family. As to quaternary structure, septins polymerize into heterooligomeric protein complexes that form filaments, and can associate with cellular membranes, actin filaments and microtubules. GTPase activity is required for filament formation. Interacts with AURKB. In terms of tissue distribution, expressed at high levels in lymphoid and hematopoietic tissues.

The protein resides in the cytoplasm. The protein localises to the cytoskeleton. It localises to the microtubule organizing center. It is found in the centrosome. Its subcellular location is the midbody. Functionally, filament-forming cytoskeletal GTPase. May play a role in cytokinesis (Potential). The polypeptide is Septin-1 (Homo sapiens (Human)).